The chain runs to 477 residues: Protoporphyrinogen oxidase (477 aa).

FAD-binding positions include 9–14 (GGGISG), W42, 57–60 (GPRG), V257, A449, and 454–456 (VAV).

It belongs to the protoporphyrinogen/coproporphyrinogen oxidase family. Protoporphyrinogen oxidase subfamily. As to quaternary structure, monomer. Homodimer. FAD is required as a cofactor.

Its subcellular location is the mitochondrion inner membrane. The enzyme catalyses protoporphyrinogen IX + 3 O2 = protoporphyrin IX + 3 H2O2. It functions in the pathway porphyrin-containing compound metabolism; protoporphyrin-IX biosynthesis; protoporphyrin-IX from protoporphyrinogen-IX: step 1/1. Functionally, catalyzes the 6-electron oxidation of protoporphyrinogen-IX to form protoporphyrin-IX. The chain is Protoporphyrinogen oxidase (PPOX) from Macaca fascicularis (Crab-eating macaque).